A 461-amino-acid chain; its full sequence is PE-PGRS family protein PE_PGRS45 (461 aa).

One can recognise a PE domain in the interval 4 to 92 (VNVAPQLVST…GSTYAVAEAA (89 aa)). Disordered regions lie at residues 232 to 251 (GGAG…GGNG) and 426 to 461 (AGSL…GADG). Residues 434 to 446 (PGFGGPGGSGGAS) are compositionally biased toward gly residues.

This sequence belongs to the mycobacterial PE family. PGRS subfamily. As to quaternary structure, interacts with human TIMM23, which is part of a complex that mediates the translocation of transit peptide-containing proteins across the mitochondrial inner membrane.

It is found in the cell membrane. The protein resides in the secreted. Its subcellular location is the cell wall. It localises to the host mitochondrion. It carries out the reaction hexadecanal + NADP(+) + CoA = hexadecanoyl-CoA + NADPH + H(+). Its activity is regulated as follows. Oxidoreductase activity is inhibited by the first line anti-tubercular drug isoniazid (INH). May be an effector protein that contributes to pathogenesis by targeting host mitochondria, where it modulates host cellular processes. In THP1 macrophages, increases the ADP-to-ATP ratio and increases the cellular ROS levels. Also induces mitochondrial perturbations through membrane depolarization, release of mitochondrial superoxide, up-regulation of expression of host proapoptotic proteins (BAX and BIM) and release of cytochrome C into the cytosol. May bind calcium to increase intracellular calcium influx, which may further lead to mitochondrial perturbations. Mitochondrial perturbations and alteration of Ca(2+) influx are independent but simultaneous events. Functionally, in vitro, shows NADPH-dependent fatty acyl coenzyme A oxidoreductase activity. Can oxidize palmitoyl-CoA, but not glutathione and thiourea. The polypeptide is PE-PGRS family protein PE_PGRS45 (Mycobacterium tuberculosis (strain ATCC 25618 / H37Rv)).